The following is a 520-amino-acid chain: 2-isopropylmalate synthase (520 aa).

A Pyruvate carboxyltransferase domain is found at 5–267; the sequence is VIIFDTTLRD…HTNINHQEIY (263 aa). Mn(2+) contacts are provided by Asp-14, His-202, His-204, and Asn-238. A regulatory domain region spans residues 392–520; it reads RLDYFSVQSG…RLQQNNQEMV (129 aa).

Belongs to the alpha-IPM synthase/homocitrate synthase family. LeuA type 1 subfamily. As to quaternary structure, homodimer. It depends on Mn(2+) as a cofactor.

It localises to the cytoplasm. It carries out the reaction 3-methyl-2-oxobutanoate + acetyl-CoA + H2O = (2S)-2-isopropylmalate + CoA + H(+). Its pathway is amino-acid biosynthesis; L-leucine biosynthesis; L-leucine from 3-methyl-2-oxobutanoate: step 1/4. Catalyzes the condensation of the acetyl group of acetyl-CoA with 3-methyl-2-oxobutanoate (2-ketoisovalerate) to form 3-carboxy-3-hydroxy-4-methylpentanoate (2-isopropylmalate). The chain is 2-isopropylmalate synthase from Yersinia enterocolitica serotype O:8 / biotype 1B (strain NCTC 13174 / 8081).